A 756-amino-acid chain; its full sequence is Membrane-anchored protein 1 (756 aa).

Residues 1–24 (MIRNTLAFLAILFLLIPTALLIIG) form the signal peptide. Residues Asn52 and Asn64 are each glycosylated (N-linked (GlcNAc...) asparagine). The next 3 helical transmembrane spans lie at 91 to 111 (IISA…IFLV), 120 to 140 (IIVV…ELVL), and 148 to 168 (QSYV…ALCL). Residue Asn190 is glycosylated (N-linked (GlcNAc...) asparagine). The disordered stretch occupies residues 281–328 (YDEFRKSESSPSRSSVLSTSKPEVHETEGYCPHKTGNRPGFPSLNIPR). Positions 289-300 (SSPSRSSVLSTS) are enriched in low complexity. N-linked (GlcNAc...) asparagine glycosylation is found at Asn396 and Asn407. The interval 427-453 (EPPATRMPQTRSPVNDHSSFPSDLPIK) is disordered. Residues 433–447 (MPQTRSPVNDHSSFP) show a composition bias toward polar residues. Ser438 is subject to Phosphoserine. 20 N-linked (GlcNAc...) asparagine glycosylation sites follow: Asn459, Asn470, Asn471, Asn496, Asn497, Asn521, Asn522, Asn547, Asn548, Asn573, Asn574, Asn594, Asn598, Asn599, Asn618, Asn623, Asn649, Asn664, Asn676, and Asn685. The tract at residues 482–650 (MLKNVGNGPR…MPTSPNSRNN (169 aa)) is disordered. A compositionally biased stretch (low complexity) spans 485–520 (NVGNGPRNAPRNNSSNNLHAQGGMPMNMRGPRGAPR). Composition is skewed to polar residues over residues 593–605 (RNTS…SEFN), 617–629 (RNAS…TDLF), and 640–650 (GMPTSPNSRNN). Residues 686–697 (GSRNPSHGSLNT) show a composition bias toward polar residues. Residues 686–713 (GSRNPSHGSLNTAHAGMGYGPRSMMRDP) are disordered. The N-linked (GlcNAc...) asparagine glycan is linked to Asn715. The tract at residues 735–756 (FELPVRGNRNNRRGPGGNRMIR) is disordered.

To yeast YOL019W and YMR063W.

The protein resides in the cell membrane. It is found in the cell tip. Required for correct cell separation at high temperatures. This chain is Membrane-anchored protein 1 (mac1), found in Schizosaccharomyces pombe (strain 972 / ATCC 24843) (Fission yeast).